The sequence spans 60 residues: Small ribosomal subunit protein bS21 (60 aa).

The interval 36 to 60 is disordered; sequence QFFETPQEKHKRKEATRRRQRSRRR. Residues 44 to 60 are compositionally biased toward basic residues; it reads KHKRKEATRRRQRSRRR.

Belongs to the bacterial ribosomal protein bS21 family.

This is Small ribosomal subunit protein bS21 (rpsU) from Synechocystis sp. (strain ATCC 27184 / PCC 6803 / Kazusa).